Here is a 295-residue protein sequence, read N- to C-terminus: Phosphatidylserine decarboxylase proenzyme (295 aa).

Catalysis depends on charge relay system; for autoendoproteolytic cleavage activity residues D113, H169, and S256. Residue S256 is the Schiff-base intermediate with substrate; via pyruvic acid; for decarboxylase activity of the active site. S256 is subject to Pyruvic acid (Ser); by autocatalysis.

The protein belongs to the phosphatidylserine decarboxylase family. PSD-B subfamily. Prokaryotic type II sub-subfamily. In terms of assembly, heterodimer of a large membrane-associated beta subunit and a small pyruvoyl-containing alpha subunit. The cofactor is pyruvate. In terms of processing, is synthesized initially as an inactive proenzyme. Formation of the active enzyme involves a self-maturation process in which the active site pyruvoyl group is generated from an internal serine residue via an autocatalytic post-translational modification. Two non-identical subunits are generated from the proenzyme in this reaction, and the pyruvate is formed at the N-terminus of the alpha chain, which is derived from the carboxyl end of the proenzyme. The autoendoproteolytic cleavage occurs by a canonical serine protease mechanism, in which the side chain hydroxyl group of the serine supplies its oxygen atom to form the C-terminus of the beta chain, while the remainder of the serine residue undergoes an oxidative deamination to produce ammonia and the pyruvoyl prosthetic group on the alpha chain. During this reaction, the Ser that is part of the protease active site of the proenzyme becomes the pyruvoyl prosthetic group, which constitutes an essential element of the active site of the mature decarboxylase.

It localises to the cell membrane. The catalysed reaction is a 1,2-diacyl-sn-glycero-3-phospho-L-serine + H(+) = a 1,2-diacyl-sn-glycero-3-phosphoethanolamine + CO2. The protein operates within phospholipid metabolism; phosphatidylethanolamine biosynthesis; phosphatidylethanolamine from CDP-diacylglycerol: step 2/2. Its function is as follows. Catalyzes the formation of phosphatidylethanolamine (PtdEtn) from phosphatidylserine (PtdSer). The sequence is that of Phosphatidylserine decarboxylase proenzyme from Clostridium botulinum (strain Langeland / NCTC 10281 / Type F).